An 87-amino-acid polypeptide reads, in one-letter code: Exendin-4 (87 aa).

The signal sequence occupies residues 1–23 (MKIILWLCVFGLFLATLFPISWQ). The propeptide occupies 24-45 (MPVESGLSSEDSASSESFASKI). Serine 86 carries the serine amide modification.

The protein belongs to the glucagon family. In terms of tissue distribution, expressed by the venom gland.

The protein localises to the secreted. Functionally, venom protein that mimics the incretin hormone glucagon-like peptide 1 (GLP-1). It stimulates insulin synthesis and secretion, protects against beta-cell apoptosis in response to different insults, and promotes beta-cell proliferation It also promotes satiety, reduces food intake, reduces fat deposition, reduces body weight and inhibits gastric emptying. Interacts with GLP-1 receptor (GLP1R). Induces hypotension that is mediated by relaxation of cardiac smooth muscle. In Heloderma suspectum cinctum (Banded Gila monster), this protein is Exendin-4.